Here is a 186-residue protein sequence, read N- to C-terminus: Peptide deformylase (186 aa).

Positions 99 and 141 each coordinate Fe cation. The active site involves Glu142. Residue His145 coordinates Fe cation.

It belongs to the polypeptide deformylase family. It depends on Fe(2+) as a cofactor.

It catalyses the reaction N-terminal N-formyl-L-methionyl-[peptide] + H2O = N-terminal L-methionyl-[peptide] + formate. Its function is as follows. Removes the formyl group from the N-terminal Met of newly synthesized proteins. Requires at least a dipeptide for an efficient rate of reaction. N-terminal L-methionine is a prerequisite for activity but the enzyme has broad specificity at other positions. This Chlamydia caviae (strain ATCC VR-813 / DSM 19441 / 03DC25 / GPIC) (Chlamydophila caviae) protein is Peptide deformylase.